The primary structure comprises 569 residues: 3-(3-hydroxy-phenyl)propionate/3-hydroxycinnamic acid hydroxylase (569 aa).

FAD-binding positions include 8–37 and 273–283; these read DVVI…VVDE and FREGRLMLAGD.

It belongs to the PheA/TfdB FAD monooxygenase family. The cofactor is FAD.

The enzyme catalyses 3-(3-hydroxyphenyl)propanoate + NADH + O2 + H(+) = 3-(2,3-dihydroxyphenyl)propanoate + NAD(+) + H2O. The catalysed reaction is (2E)-3-(3-hydroxyphenyl)prop-2-enoate + NADH + O2 + H(+) = (2E)-3-(2,3-dihydroxyphenyl)prop-2-enoate + NAD(+) + H2O. The protein operates within aromatic compound metabolism; 3-phenylpropanoate degradation. In terms of biological role, catalyzes the insertion of one atom of molecular oxygen into position 2 of the phenyl ring of 3-(3-hydroxyphenyl)propionate (3-HPP) and hydroxycinnamic acid (3HCI). This chain is 3-(3-hydroxy-phenyl)propionate/3-hydroxycinnamic acid hydroxylase, found in Mycolicibacterium gilvum (strain PYR-GCK) (Mycobacterium gilvum (strain PYR-GCK)).